The primary structure comprises 93 residues: UPF0358 protein BBR47_22520 (93 aa).

It belongs to the UPF0358 family.

The polypeptide is UPF0358 protein BBR47_22520 (Brevibacillus brevis (strain 47 / JCM 6285 / NBRC 100599)).